Reading from the N-terminus, the 145-residue chain is Hydrophobin-like protein 1 (145 aa).

Positions 1–20 (MYLLQISISLLLLISTAATA) are cleaved as a signal peptide. Asparagine 36 carries N-linked (GlcNAc...) asparagine glycosylation. 4 disulfide bridges follow: cysteine 61–cysteine 121, cysteine 71–cysteine 113, cysteine 72–cysteine 104, and cysteine 122–cysteine 139.

The protein localises to the secreted. It is found in the cell wall. In terms of biological role, aerial growth, conidiation, and dispersal of filamentous fungi in the environment rely upon a capability of their secreting small amphipathic proteins called hydrophobins (HPBs) with low sequence identity. Class I can self-assemble into an outermost layer of rodlet bundles on aerial cell surfaces, conferring cellular hydrophobicity that supports fungal growth, development and dispersal; whereas Class II form highly ordered films at water-air interfaces through intermolecular interactions but contribute nothing to the rodlet structure. In Botryotinia fuckeliana, hydrophobins are not involved in conferring surface hydrophobicity to conidia and aerial hyphae and their function in sclerotia and fruiting bodies remains to be investigated. The sequence is that of Hydrophobin-like protein 1 from Botryotinia fuckeliana (strain B05.10) (Noble rot fungus).